A 109-amino-acid chain; its full sequence is Nascent polypeptide-associated complex protein (109 aa).

Residues 3-70 form the NAC-A/B domain; it reads PMNPKQMKKM…YEVVKRPPKI (68 aa).

It belongs to the NAC-alpha family. Homodimer. Interacts with the ribosome. Binds ribosomal RNA.

In terms of biological role, contacts the emerging nascent chain on the ribosome. This is Nascent polypeptide-associated complex protein from Archaeoglobus fulgidus (strain ATCC 49558 / DSM 4304 / JCM 9628 / NBRC 100126 / VC-16).